Consider the following 562-residue polypeptide: Glucocorticoid modulatory element-binding protein 1 (562 aa).

The residue at position 2 (alanine 2) is an N-acetylalanine. An SAND domain is found at 72-156; sequence ASSIEGNEDM…RKMMDSGQID (85 aa). Cysteine 103 lines the Zn(2+) pocket. DNA is bound by residues lysine 129, lysine 133, lysine 136, and arginine 147. Zn(2+)-binding residues include histidine 160, cysteine 164, and cysteine 168. Residues 311–355 are a coiled coil; that stretch reads LDNRRKQVEQGEEQFLYTLADLERQLEEQKKQAQDPRLKSQTVQN. A disordered region spans residues 360-384; that stretch reads PVSTPKPPKRPRLQRPASTTVLSPS. Residues 375 to 384 show a composition bias toward polar residues; the sequence is PASTTVLSPS.

As to quaternary structure, homodimer, and heterodimer of GMEB1 and GMEB2. Interacts with TRIM63. Interacts with the glucocorticoid receptor (NR3C1) and NCOA2/TIF2. May interact with HSP27 and CREB-binding protein (CBP). In terms of tissue distribution, ubiquitous. Low levels were detected in heart, brain, spleen, lung, liver, skeletal muscle, kidney and testis.

It is found in the nucleus. The protein resides in the cytoplasm. Functionally, trans-acting factor that binds to glucocorticoid modulatory elements (GME) present in the TAT (tyrosine aminotransferase) promoter and increases sensitivity to low concentrations of glucocorticoids. Also binds to the transferrin receptor promoter. The chain is Glucocorticoid modulatory element-binding protein 1 (Gmeb1) from Mus musculus (Mouse).